The sequence spans 242 residues: uncharacterized protein (242 aa).

It to E.coli MazG and to plasmid pIP1100 erythromycin esterase.

This is an uncharacterized protein from Streptomyces cacaoi.